Here is a 287-residue protein sequence, read N- to C-terminus: Elongation factor Ts (287 aa).

The interval 80-83 (TDFL) is involved in Mg(2+) ion dislocation from EF-Tu.

It belongs to the EF-Ts family.

The protein localises to the cytoplasm. Functionally, associates with the EF-Tu.GDP complex and induces the exchange of GDP to GTP. It remains bound to the aminoacyl-tRNA.EF-Tu.GTP complex up to the GTP hydrolysis stage on the ribosome. This chain is Elongation factor Ts, found in Stutzerimonas stutzeri (strain A1501) (Pseudomonas stutzeri).